We begin with the raw amino-acid sequence, 989 residues long: Protease PrtH (989 aa).

Repeats lie at residues 270–323 (TPTD…KCVN) and 528–581 (SPAS…VCVD). The interval 969–989 (PRDTPWRYGKRELPPSASGMR) is disordered.

Belongs to the peptidase C25 family.

It localises to the cytoplasmic vesicle. Cleaves human complement component C3. May enable P.gingivalis to evade complement-mediated killing during the immune response. Plays an important role in soft tissue infections and is a virulence factor. The chain is Protease PrtH (prtH) from Porphyromonas gingivalis (strain ATCC BAA-308 / W83).